A 435-amino-acid chain; its full sequence is Large ribosomal subunit protein mL65 (435 aa).

It belongs to the mitochondrion-specific ribosomal protein mL65 family. As to quaternary structure, component of the mitochondrial ribosome small subunit (28S) which comprises a 12S rRNA and about 30 distinct proteins.

It localises to the mitochondrion. This chain is Large ribosomal subunit protein mL65 (MRPS30), found in Bos taurus (Bovine).